Reading from the N-terminus, the 356-residue chain is 1-acyl-sn-glycerol-3-phosphate acyltransferase LPAT1, chloroplastic (356 aa).

A chloroplast-targeting transit peptide spans 1 to 56 (MDVASARSISSHPSYYGKPICSSQSSLIRISRDKVCCFGRISNGMTSFTTSLHAVP). A helical membrane pass occupies residues 127-147 (GIFFCVVAGISATFLIVLMII). Residues 202 to 207 (HQSFLD) carry the HXXXXD motif motif. Residues 224–244 (TGIFVIPIIGWAMSMMGVVPL) traverse the membrane as a helical segment.

The protein belongs to the 1-acyl-sn-glycerol-3-phosphate acyltransferase family. In terms of tissue distribution, widely expressed. Expressed at higher level in leaves. Expressed at lower level in silique walls compared to leaves.

Its subcellular location is the plastid. It localises to the chloroplast membrane. The enzyme catalyses a fatty acyl-[ACP] + a 1-acyl-sn-glycero-3-phosphate = a 1,2-diacyl-sn-glycero-3-phosphate + holo-[ACP]. It catalyses the reaction a 1-acyl-sn-glycero-3-phosphate + an acyl-CoA = a 1,2-diacyl-sn-glycero-3-phosphate + CoA. It functions in the pathway phospholipid metabolism; CDP-diacylglycerol biosynthesis; CDP-diacylglycerol from sn-glycerol 3-phosphate: step 2/3. Plastidial enzyme of the prokaryotic glycerol-3-phosphate pathway that converts lysophosphatidic acid (LPA) into phosphatidic acid by incorporating an acyl moiety at position sn-2. Utilizes palmitoyl-ACP (16:0-ACP) to produce phosphatidic acid containing a saturated group at position sn-2, which is characteristic of lipids synthesized by the prokaryotic pathway. In vitro, can use 16:0-CoA as acyl donor. Essential for embryo development during the transition from the globular to the heart stage when chloroplasts begin to form. This is 1-acyl-sn-glycerol-3-phosphate acyltransferase LPAT1, chloroplastic from Arabidopsis thaliana (Mouse-ear cress).